We begin with the raw amino-acid sequence, 903 residues long: Valine--tRNA ligase (903 aa).

The span at 1-15 (MVCVTDQNNETTSQN) shows a compositional bias: polar residues. Positions 1 to 21 (MVCVTDQNNETTSQNRADKLP) are disordered. Residues 61-71 (PNVTGQLHMGH) carry the 'HIGH' region motif. The 'KMSKS' region signature appears at 552–556 (KMSKS). Lys555 contributes to the ATP binding site. Positions 836 to 903 (TVDVAAERKR…RINKRLEELA (68 aa)) form a coiled coil.

The protein belongs to the class-I aminoacyl-tRNA synthetase family. ValS type 1 subfamily. Monomer.

It is found in the cytoplasm. The enzyme catalyses tRNA(Val) + L-valine + ATP = L-valyl-tRNA(Val) + AMP + diphosphate. Catalyzes the attachment of valine to tRNA(Val). As ValRS can inadvertently accommodate and process structurally similar amino acids such as threonine, to avoid such errors, it has a 'posttransfer' editing activity that hydrolyzes mischarged Thr-tRNA(Val) in a tRNA-dependent manner. The protein is Valine--tRNA ligase of Corynebacterium glutamicum (strain ATCC 13032 / DSM 20300 / JCM 1318 / BCRC 11384 / CCUG 27702 / LMG 3730 / NBRC 12168 / NCIMB 10025 / NRRL B-2784 / 534).